The primary structure comprises 227 residues: Ribose-5-phosphate isomerase A (227 aa).

Substrate is bound by residues 28-31 (TGST), 84-87 (DGAD), and 97-100 (KGGG). The active-site Proton acceptor is E106. A substrate-binding site is contributed by K124.

This sequence belongs to the ribose 5-phosphate isomerase family. As to quaternary structure, homodimer.

The enzyme catalyses aldehydo-D-ribose 5-phosphate = D-ribulose 5-phosphate. Its pathway is carbohydrate degradation; pentose phosphate pathway; D-ribose 5-phosphate from D-ribulose 5-phosphate (non-oxidative stage): step 1/1. In terms of biological role, catalyzes the reversible conversion of ribose-5-phosphate to ribulose 5-phosphate. In Lactiplantibacillus plantarum (strain ATCC BAA-793 / NCIMB 8826 / WCFS1) (Lactobacillus plantarum), this protein is Ribose-5-phosphate isomerase A.